The primary structure comprises 136 residues: Small ribosomal subunit protein eS8 (136 aa).

The protein belongs to the eukaryotic ribosomal protein eS8 family. As to quaternary structure, part of the 30S ribosomal subunit.

This Aeropyrum pernix (strain ATCC 700893 / DSM 11879 / JCM 9820 / NBRC 100138 / K1) protein is Small ribosomal subunit protein eS8 (rps8e).